A 532-amino-acid chain; its full sequence is Probable pectinesterase/pectinesterase inhibitor 39 (532 aa).

Residues 1-34 (MINNHPIREKPKHIIFNLLSLIFFLIFLSTVVSS) form the signal peptide. Residues 35–169 (QSPSYTTHKT…ENLKEIILDI (135 aa)) form a pectinesterase inhibitor 39 region. N-linked (GlcNAc...) asparagine glycans are attached at residues N62, N74, N85, N172, N221, N231, N244, and N287. Residues 221–518 (NLSVAIDGTG…FTVGPFIDGS (298 aa)) are pectinesterase 39. Residues T296 and Q326 each coordinate substrate. The active-site Proton donor; for pectinesterase activity is D349. Catalysis depends on D370, which acts as the Nucleophile; for pectinesterase activity. N382 and N404 each carry an N-linked (GlcNAc...) asparagine glycan. Substrate-binding residues include R438 and W440. N-linked (GlcNAc...) asparagine glycans are attached at residues N502 and N522.

The protein in the N-terminal section; belongs to the PMEI family. It in the C-terminal section; belongs to the pectinesterase family. Expressed in siliques but not in flower buds.

The protein resides in the secreted. It localises to the cell wall. It carries out the reaction [(1-&gt;4)-alpha-D-galacturonosyl methyl ester](n) + n H2O = [(1-&gt;4)-alpha-D-galacturonosyl](n) + n methanol + n H(+). It functions in the pathway glycan metabolism; pectin degradation; 2-dehydro-3-deoxy-D-gluconate from pectin: step 1/5. Its function is as follows. Acts in the modification of cell walls via demethylesterification of cell wall pectin. This Arabidopsis thaliana (Mouse-ear cress) protein is Probable pectinesterase/pectinesterase inhibitor 39 (PME39).